A 431-amino-acid chain; its full sequence is Glucose-1-phosphate adenylyltransferase (431 aa).

Lysine 39 lines the beta-D-fructose 1,6-bisphosphate pocket. AMP contacts are provided by arginine 40, histidine 46, and arginine 52. An alpha-D-glucose 1-phosphate-binding site is contributed by tyrosine 114. Position 130 (arginine 130) interacts with AMP. Alpha-D-glucose 1-phosphate-binding positions include glycine 179, 194–195 (EK), and serine 212. The AMP site is built by glutamate 370 and arginine 386. Beta-D-fructose 1,6-bisphosphate-binding positions include 419–423 (REMLR) and 429–431 (QER).

This sequence belongs to the bacterial/plant glucose-1-phosphate adenylyltransferase family. As to quaternary structure, homotetramer.

The catalysed reaction is alpha-D-glucose 1-phosphate + ATP + H(+) = ADP-alpha-D-glucose + diphosphate. It functions in the pathway glycan biosynthesis; glycogen biosynthesis. Its activity is regulated as follows. Allosterically activated by fructose-1,6-bisphosphate (F16BP) and inhibited by AMP. Involved in the biosynthesis of ADP-glucose, a building block required for the elongation reactions to produce glycogen. Catalyzes the reaction between ATP and alpha-D-glucose 1-phosphate (G1P) to produce pyrophosphate and ADP-Glc. The chain is Glucose-1-phosphate adenylyltransferase from Salmonella paratyphi A (strain ATCC 9150 / SARB42).